The sequence spans 293 residues: Phosphatidylcholine-sterol acyltransferase (293 aa).

Asparagine 26 is a glycosylation site (N-linked (GlcNAc...) asparagine). Catalysis depends on serine 123, which acts as the Nucleophile. The N-linked (GlcNAc...) asparagine glycan is linked to asparagine 179. Cysteine 220 and cysteine 263 are oxidised to a cystine. Residue aspartate 252 is the Charge relay system of the active site. An N-linked (GlcNAc...) asparagine glycan is attached at asparagine 280. Histidine 284 acts as the Charge relay system in catalysis.

The protein belongs to the AB hydrolase superfamily. Lipase family.

It is found in the secreted. It catalyses the reaction a sterol + a 1,2-diacyl-sn-glycero-3-phosphocholine = a sterol ester + a 1-acyl-sn-glycero-3-phosphocholine. APOA1 is the most potent activator in plasma. Also activated by APOE, APOC1 and APOA4. Central enzyme in the extracellular metabolism of plasma lipoproteins. Synthesized mainly in the liver and secreted into plasma where it converts cholesterol and phosphatidylcholines (lecithins) to cholesteryl esters and lysophosphatidylcholines on the surface of high and low density lipoproteins (HDLs and LDLs). The cholesterol ester is then transported back to the liver. Has a preference for plasma 16:0-18:2 or 18:O-18:2 phosphatidylcholines. Also produced in the brain by primary astrocytes, and esterifies free cholesterol on nascent APOE-containing lipoproteins secreted from glia and influences cerebral spinal fluid (CSF) APOE- and APOA1 levels. Together with APOE and the cholesterol transporter ABCA1, plays a key role in the maturation of glial-derived, nascent lipoproteins. Required for remodeling high-density lipoprotein particles into their spherical forms. The polypeptide is Phosphatidylcholine-sterol acyltransferase (LCAT) (Gerbilliscus gambianus (Gambian gerbil)).